The sequence spans 466 residues: 3-isopropylmalate dehydratase large subunit (466 aa).

[4Fe-4S] cluster-binding residues include C347, C407, and C410.

Belongs to the aconitase/IPM isomerase family. LeuC type 1 subfamily. Heterodimer of LeuC and LeuD. Requires [4Fe-4S] cluster as cofactor.

The enzyme catalyses (2R,3S)-3-isopropylmalate = (2S)-2-isopropylmalate. It functions in the pathway amino-acid biosynthesis; L-leucine biosynthesis; L-leucine from 3-methyl-2-oxobutanoate: step 2/4. Functionally, catalyzes the isomerization between 2-isopropylmalate and 3-isopropylmalate, via the formation of 2-isopropylmaleate. This chain is 3-isopropylmalate dehydratase large subunit, found in Solibacter usitatus (strain Ellin6076).